The sequence spans 690 residues: Glycine--tRNA ligase beta subunit (690 aa).

The protein belongs to the class-II aminoacyl-tRNA synthetase family. In terms of assembly, tetramer of two alpha and two beta subunits.

The protein localises to the cytoplasm. The enzyme catalyses tRNA(Gly) + glycine + ATP = glycyl-tRNA(Gly) + AMP + diphosphate. This is Glycine--tRNA ligase beta subunit from Proteus mirabilis (strain HI4320).